The sequence spans 360 residues: Chorismate synthase (360 aa).

NADP(+) is bound by residues arginine 48 and arginine 54. FMN is bound by residues 125–127, 246–247, glycine 286, 301–305, and arginine 327; these read RSS, NA, and KPTSS.

Belongs to the chorismate synthase family. In terms of assembly, homotetramer. FMNH2 serves as cofactor.

The catalysed reaction is 5-O-(1-carboxyvinyl)-3-phosphoshikimate = chorismate + phosphate. It participates in metabolic intermediate biosynthesis; chorismate biosynthesis; chorismate from D-erythrose 4-phosphate and phosphoenolpyruvate: step 7/7. Catalyzes the anti-1,4-elimination of the C-3 phosphate and the C-6 proR hydrogen from 5-enolpyruvylshikimate-3-phosphate (EPSP) to yield chorismate, which is the branch point compound that serves as the starting substrate for the three terminal pathways of aromatic amino acid biosynthesis. This reaction introduces a second double bond into the aromatic ring system. The sequence is that of Chorismate synthase from Haemophilus ducreyi (strain 35000HP / ATCC 700724).